Reading from the N-terminus, the 552-residue chain is Protein TRM32 (552 aa).

A disordered region spans residues 295–379; the sequence is TDLPRDSSTS…NKTAEKTETL (85 aa). Basic and acidic residues predominate over residues 331–351; it reads VRAEKEEKYEVQEERSQENHL. Positions 352-371 are enriched in polar residues; that stretch reads DSSNQRILQQEPDSVPSTNK.

This is Protein TRM32 (TRM32) from Arabidopsis thaliana (Mouse-ear cress).